Here is a 412-residue protein sequence, read N- to C-terminus: Glutamate-pyruvate aminotransferase AlaC (412 aa).

Position 244 is an N6-(pyridoxal phosphate)lysine (Lys-244).

This sequence belongs to the class-I pyridoxal-phosphate-dependent aminotransferase family. As to quaternary structure, homodimer. Pyridoxal 5'-phosphate serves as cofactor.

It is found in the cytoplasm. The catalysed reaction is L-alanine + 2-oxoglutarate = pyruvate + L-glutamate. It functions in the pathway amino-acid biosynthesis; L-alanine biosynthesis. Functionally, involved in the biosynthesis of alanine. Catalyzes the transamination of pyruvate by glutamate, leading to the formation of L-alanine and 2-oxoglutarate. Is also able to catalyze the reverse reaction. This Escherichia coli (strain K12) protein is Glutamate-pyruvate aminotransferase AlaC.